The primary structure comprises 353 residues: Phosphate acyltransferase (353 aa).

It belongs to the PlsX family. Homodimer. Probably interacts with PlsY.

The protein localises to the cytoplasm. The catalysed reaction is a fatty acyl-[ACP] + phosphate = an acyl phosphate + holo-[ACP]. It functions in the pathway lipid metabolism; phospholipid metabolism. Its function is as follows. Catalyzes the reversible formation of acyl-phosphate (acyl-PO(4)) from acyl-[acyl-carrier-protein] (acyl-ACP). This enzyme utilizes acyl-ACP as fatty acyl donor, but not acyl-CoA. The polypeptide is Phosphate acyltransferase (Agrobacterium fabrum (strain C58 / ATCC 33970) (Agrobacterium tumefaciens (strain C58))).